Consider the following 725-residue polypeptide: Fatty acid oxidation complex subunit alpha (725 aa).

The interval 1-189 (MLYKGDTLYL…KIGLVDGVVK (189 aa)) is enoyl-CoA hydratase/isomerase. A substrate-binding site is contributed by aspartate 296. Residues 311-725 (ETPKQAAVLG…RLNQPVRLVL (415 aa)) are 3-hydroxyacyl-CoA dehydrogenase. NAD(+)-binding positions include methionine 324, aspartate 343, 400–402 (VVE), lysine 407, and serine 429. Histidine 450 functions as the For 3-hydroxyacyl-CoA dehydrogenase activity in the catalytic mechanism. Asparagine 453 is a binding site for NAD(+). Asparagine 500 and tyrosine 660 together coordinate substrate.

In the N-terminal section; belongs to the enoyl-CoA hydratase/isomerase family. The protein in the C-terminal section; belongs to the 3-hydroxyacyl-CoA dehydrogenase family. Heterotetramer of two alpha chains (FadB) and two beta chains (FadA).

It catalyses the reaction a (3S)-3-hydroxyacyl-CoA + NAD(+) = a 3-oxoacyl-CoA + NADH + H(+). The catalysed reaction is a (3S)-3-hydroxyacyl-CoA = a (2E)-enoyl-CoA + H2O. It carries out the reaction a 4-saturated-(3S)-3-hydroxyacyl-CoA = a (3E)-enoyl-CoA + H2O. The enzyme catalyses (3S)-3-hydroxybutanoyl-CoA = (3R)-3-hydroxybutanoyl-CoA. It catalyses the reaction a (3Z)-enoyl-CoA = a 4-saturated (2E)-enoyl-CoA. The catalysed reaction is a (3E)-enoyl-CoA = a 4-saturated (2E)-enoyl-CoA. It functions in the pathway lipid metabolism; fatty acid beta-oxidation. Involved in the aerobic and anaerobic degradation of long-chain fatty acids via beta-oxidation cycle. Catalyzes the formation of 3-oxoacyl-CoA from enoyl-CoA via L-3-hydroxyacyl-CoA. It can also use D-3-hydroxyacyl-CoA and cis-3-enoyl-CoA as substrate. The polypeptide is Fatty acid oxidation complex subunit alpha (Salmonella paratyphi A (strain ATCC 9150 / SARB42)).